The following is a 653-amino-acid chain: Mannosyl-oligosaccharide 1,2-alpha-mannosidase IA (653 aa).

The Cytoplasmic portion of the chain corresponds to 1–41 (MPVGGLLPLFSSPAGGVLGGGLGGGGGRKGSGPAALRLTEK). The chain crosses the membrane as a helical; Signal-anchor for type II membrane protein span at residues 42 to 62 (FVLLLVFSAFITLCFGAIFFL). The Lumenal segment spans residues 63–653 (PDSSKLLSGV…DKKEVEIREE (591 aa)). The segment at 81–116 (QPAADHKPGPGARAEDAAEGRARRREEGAPGDPEAA) is disordered. A compositionally biased stretch (basic and acidic residues) spans 84 to 108 (ADHKPGPGARAEDAAEGRARRREEG). Residues Cys-476 and Cys-508 are joined by a disulfide bond. Asn-513 carries an N-linked (GlcNAc...) asparagine glycan. Glu-522 serves as the catalytic Proton donor.

The protein belongs to the glycosyl hydrolase 47 family. The cofactor is Ca(2+).

It is found in the golgi apparatus membrane. The catalysed reaction is N(4)-(alpha-D-Man-(1-&gt;2)-alpha-D-Man-(1-&gt;2)-alpha-D-Man-(1-&gt;3)-[alpha-D-Man-(1-&gt;2)-alpha-D-Man-(1-&gt;3)-[alpha-D-Man-(1-&gt;2)-alpha-D-Man-(1-&gt;6)]-alpha-D-Man-(1-&gt;6)]-beta-D-Man-(1-&gt;4)-beta-D-GlcNAc-(1-&gt;4)-beta-D-GlcNAc)-L-asparaginyl-[protein] (N-glucan mannose isomer 9A1,2,3B1,2,3) + 4 H2O = N(4)-(alpha-D-Man-(1-&gt;3)-[alpha-D-Man-(1-&gt;3)-[alpha-D-Man-(1-&gt;6)]-alpha-D-Man-(1-&gt;6)]-beta-D-Man-(1-&gt;4)-beta-D-GlcNAc-(1-&gt;4)-beta-D-GlcNAc)-L-asparaginyl-[protein] (N-glucan mannose isomer 5A1,2) + 4 beta-D-mannose. It carries out the reaction N(4)-(alpha-D-Man-(1-&gt;2)-alpha-D-Man-(1-&gt;2)-alpha-D-Man-(1-&gt;3)-[alpha-D-Man-(1-&gt;3)-[alpha-D-Man-(1-&gt;2)-alpha-D-Man-(1-&gt;6)]-alpha-D-Man-(1-&gt;6)]-beta-D-Man-(1-&gt;4)-beta-D-GlcNAc-(1-&gt;4)-beta-D-GlcNAc)-L-asparaginyl-[protein] (N-glucan mannose isomer 8A1,2,3B1,3) + 3 H2O = N(4)-(alpha-D-Man-(1-&gt;3)-[alpha-D-Man-(1-&gt;3)-[alpha-D-Man-(1-&gt;6)]-alpha-D-Man-(1-&gt;6)]-beta-D-Man-(1-&gt;4)-beta-D-GlcNAc-(1-&gt;4)-beta-D-GlcNAc)-L-asparaginyl-[protein] (N-glucan mannose isomer 5A1,2) + 3 beta-D-mannose. The protein operates within protein modification; protein glycosylation. With respect to regulation, inhibited by both 1-deoxymannojirimycin and kifunensine. Its function is as follows. Involved in the maturation of Asn-linked oligosaccharides. Progressively trim alpha-1,2-linked mannose residues from Man(9)GlcNAc(2) to produce Man(5)GlcNAc(2). The sequence is that of Mannosyl-oligosaccharide 1,2-alpha-mannosidase IA (MAN1A1) from Homo sapiens (Human).